We begin with the raw amino-acid sequence, 244 residues long: Electron transfer flavoprotein beta subunit lysine methyltransferase homolog (244 aa).

The protein belongs to the methyltransferase superfamily. ETFBKMT family.

Probable methyltransferase. This Caenorhabditis elegans protein is Electron transfer flavoprotein beta subunit lysine methyltransferase homolog.